We begin with the raw amino-acid sequence, 247 residues long: Nodulation protein H (247 aa).

The interval 1-17 (MTHSTLPPQPFAILAMP) is hydrophobic.

Required for the formation of sulfated nod factor. Proposed to transfer activated sulfate (PAPS) to a N-acetylglucosamine of the nod factor. The chain is Nodulation protein H (nodH) from Rhizobium meliloti (strain 1021) (Ensifer meliloti).